Reading from the N-terminus, the 796-residue chain is Histone acetyltransferase KAT2B (796 aa).

Disordered stretches follow at residues 1-32, 77-97, and 371-408; these read MSES…TECS, WKSQ…AEQP, and AGGG…DSKR. The span at 10–24 shows a compositional bias: low complexity; the sequence is GSPAVGAAGSAPAAP. The span at 81–94 shows a compositional bias: pro residues; the sequence is NPPPTPPPPTPPRA. The segment covering 392–408 has biased composition (basic and acidic residues); that stretch reads GEKRKPAEPLSHEDSKR. The N-acetyltransferase domain occupies 469 to 617; sequence LNQKPNKKIL…GATLMGCELN (149 aa). Glu536 functions as the Proton donor/acceptor in the catalytic mechanism. Residues 540-542, 547-553, and 578-581 each bind acetyl-CoA; these read CAV, QVKGYGT, and YAIG. Residues 687 to 791 form the Bromo domain; sequence KDPDQLYSTL…KFFYTKIKEA (105 aa).

The protein belongs to the acetyltransferase family. GCN5 subfamily.

The protein localises to the nucleus. The protein resides in the cytoplasm. Its subcellular location is the cytoskeleton. It localises to the microtubule organizing center. It is found in the centrosome. The enzyme catalyses L-lysyl-[histone] + acetyl-CoA = N(6)-acetyl-L-lysyl-[histone] + CoA + H(+). It catalyses the reaction L-lysyl-[protein] + acetyl-CoA = N(6)-acetyl-L-lysyl-[protein] + CoA + H(+). It carries out the reaction spermidine + acetyl-CoA = N(8)-acetylspermidine + CoA + H(+). Functionally, functions as a histone acetyltransferase (HAT) to promote transcriptional activation. Has significant histone acetyltransferase activity with core histones (H3 and H4), and also with nucleosome core particles. Has a a strong preference for acetylation of H3 at 'Lys-9' (H3K9ac). Also acetylates non-histone proteins. Involved in heart and limb development by mediating acetylation of tbx5. Also acetylates spermidine. Together with kat2a, required for growth and differentiation of craniofacial cartilage and bone by regulating acetylation of histone H3 at 'Lys-9' (H3K9ac). In Danio rerio (Zebrafish), this protein is Histone acetyltransferase KAT2B.